Here is a 1439-residue protein sequence, read N- to C-terminus: Fanconi anemia group A protein homolog (1439 aa).

A disordered region spans residues 1–20; sequence MPGSPARGAAMGGGPRGLRK. Positions 19–35 match the Nuclear localization signal motif; the sequence is RKTWTELLAGRVKKQKY.

As to quaternary structure, belongs to the multisubunit FA complex composed of FANCA, FANCB, FANCC, FANCE, FANCF, FANCG, FANCL/PHF9 and FANCM. In complex with FANCF, FANCG and FANCL, but not with FANCC, nor FANCE, interacts with HES1; this interaction may be essential for the stability and nuclear localization of FA core complex proteins. The complex with FANCC and FANCG may also include EIF2AK2 and HSP70. Interacts with FAAP20; interaction is direct. In terms of processing, phosphorylated primarily on serine residues. Phosphorylation is required for the formation of the nuclear complex. In terms of tissue distribution, mainly expressed in testis and lymphoid tissues like thymus, lymph nodes, and spleen, and at lower levels in kidney and ovary.

The protein localises to the nucleus. The protein resides in the cytoplasm. Its function is as follows. DNA repair protein that may operate in a postreplication repair or a cell cycle checkpoint function. May be involved in interstrand DNA cross-link repair and in the maintenance of normal chromosome stability. This chain is Fanconi anemia group A protein homolog (Fanca), found in Mus musculus (Mouse).